We begin with the raw amino-acid sequence, 51 residues long: MANYQNASNRNSSNKLVAPGAQAAIDQMKFEIASEFGVNLGPDNSSSRRLG.

It belongs to the alpha/beta-type SASP family.

The chain is Protein SspM (sspM) from Mycolicibacterium phlei (Mycobacterium phlei).